The chain runs to 729 residues: Heterogeneous nuclear ribonucleoprotein M (729 aa).

Positions 1 to 13 (MAAGVEAAAEVAA) are enriched in low complexity. The interval 1-65 (MAAGVEAAAE…GGNRFEPYSN (65 aa)) is disordered. Residue Ala-2 is modified to N-acetylalanine. Lys-17 is covalently cross-linked (Glycyl lysine isopeptide (Lys-Gly) (interchain with G-Cter in SUMO2)). Ser-29 is subject to Phosphoserine. Glycyl lysine isopeptide (Lys-Gly) (interchain with G-Cter in SUMO2) cross-links involve residues Lys-37, Lys-68, and Lys-82. A compositionally biased stretch (basic and acidic residues) spans 37 to 49 (KGEERPTQNEKRK). RRM domains are found at residues 70–148 (YRAF…EDPD) and 203–280 (STVF…MDER). Ser-85 carries the phosphoserine modification. Residues Lys-87 and Lys-126 each participate in a glycyl lysine isopeptide (Lys-Gly) (interchain with G-Cter in SUMO2) cross-link. Residue Lys-133 is modified to N6-acetyllysine; alternate. A Glycyl lysine isopeptide (Lys-Gly) (interchain with G-Cter in SUMO2); alternate cross-link involves residue Lys-133. Residues Lys-142 and Lys-144 each participate in a glycyl lysine isopeptide (Lys-Gly) (interchain with G-Cter in SUMO2) cross-link. Position 203 is a phosphoserine (Ser-203). Lys-220 participates in a covalent cross-link: Glycyl lysine isopeptide (Lys-Gly) (interchain with G-Cter in SUMO2). Lys-276 carries the post-translational modification N6-acetyllysine; alternate. Residue Lys-276 forms a Glycyl lysine isopeptide (Lys-Gly) (interchain with G-Cter in SUMO2); alternate linkage. Residues Lys-284 and Lys-344 each participate in a glycyl lysine isopeptide (Lys-Gly) (interchain with G-Cter in SUMO2) cross-link. 2 positions are modified to phosphoserine: Ser-364 and Ser-376. Glycyl lysine isopeptide (Lys-Gly) (interchain with G-Cter in SUMO2) cross-links involve residues Lys-380 and Lys-387. A Phosphoserine modification is found at Ser-396. A run of 4 repeats spans residues 399 to 404 (GIERMG), 406 to 411 (GIDRIS), 414 to 419 (GMERMG), and 425 to 430 (GMDRVG). The interval 399-607 (GIERMGPGID…ALGAGIERMG (209 aa)) is 27 X 6 AA repeats of [GEVSTPAN]-[ILMV]-[DE]-[RH]-[MLVI]-[GAV]. Position 431 is a phosphoserine (Ser-431). 3 tandem repeats follow at residues 432 to 437 (EIERMG), 439 to 444 (VMDRMG), and 445 to 450 (SVERMG). Ser-451 carries the phosphoserine modification. 4 repeat units span residues 452 to 457 (SIERMG), 460 to 465 (GLDHMA), 467 to 472 (SIERMG), and 474 to 479 (TMERIG). Ser-467 carries the post-translational modification Phosphoserine. Ser-480 is modified (phosphoserine). Tandem repeats lie at residues 481–486 (GVERMG), 492–497 (GLERMA), 499–504 (PIDRVG), 506–511 (TIERMG), 513–518 (GVERMG), 520–525 (AIERMG), 527–532 (SMDRMV), 539–544 (SLERMG), 546–551 (VMDRMA), 553–558 (GLERMG), 561–566 (NLERMG), 567–571 (LERMG), 574–579 (SLERMG), 580–584 (LERMG), 587–592 (SLERMG), and 602–607 (GIERMG). At Arg-495 the chain carries Omega-N-methylarginine. Ser-527 is subject to Phosphoserine. A Phosphoserine modification is found at Ser-574. Ser-587 carries the phosphoserine modification. Phosphoserine is present on residues Ser-617, Ser-632, and Ser-636. A Glycyl lysine isopeptide (Lys-Gly) (interchain with G-Cter in SUMO2) cross-link involves residue Lys-650. The region spanning 652–728 (CQIFVRNLPF…REIDVRIDRN (77 aa)) is the RRM 3 domain. The residue at position 664 (Thr-664) is a Phosphothreonine. Lys-666 is covalently cross-linked (Glycyl lysine isopeptide (Lys-Gly) (interchain with G-Cter in SUMO2)). Lys-671 bears the N6-acetyllysine mark. Residues Lys-684 and Lys-691 each participate in a glycyl lysine isopeptide (Lys-Gly) (interchain with G-Cter in SUMO2) cross-link. At Lys-697 the chain carries N6-acetyllysine; alternate. Lys-697 is covalently cross-linked (Glycyl lysine isopeptide (Lys-Gly) (interchain with G-Cter in SUMO2); alternate). Lys-697 is covalently cross-linked (Glycyl lysine isopeptide (Lys-Gly) (interchain with G-Cter in SUMO1); alternate). The residue at position 700 (Ser-700) is a Phosphoserine. Lys-715 participates in a covalent cross-link: Glycyl lysine isopeptide (Lys-Gly) (interchain with G-Cter in SUMO2).

Identified in the spliceosome C complex. Interacts with PPIA/CYPA. Sumoylated.

It localises to the nucleus. Its function is as follows. Pre-mRNA binding protein in vivo, binds avidly to poly(G) and poly(U) RNA homopolymers in vitro. Involved in splicing. Acts as a receptor for carcinoembryonic antigen in Kupffer cells, may initiate a series of signaling events leading to tyrosine phosphorylation of proteins and induction of IL-1 alpha, IL-6, IL-10 and tumor necrosis factor alpha cytokines. This Mus musculus (Mouse) protein is Heterogeneous nuclear ribonucleoprotein M (Hnrnpm).